We begin with the raw amino-acid sequence, 629 residues long: Chaperone protein HtpG (629 aa).

The segment at 1-343 (MQKQTLSFQA…SSDLPLNVSR (343 aa)) is a; substrate-binding. The b stretch occupies residues 344-558 (ELLQESRAVK…DGDMSTQLAR (215 aa)). A c region spans residues 559–629 (MLKQAGQTVP…YVRRVNALLV (71 aa)).

This sequence belongs to the heat shock protein 90 family. As to quaternary structure, homodimer.

Its subcellular location is the cytoplasm. In terms of biological role, molecular chaperone. Has ATPase activity. This chain is Chaperone protein HtpG, found in Polaromonas naphthalenivorans (strain CJ2).